The sequence spans 441 residues: Glutamyl-tRNA reductase (441 aa).

Substrate-binding positions include 49–52 (TCNR), Ser-109, 114–116 (EGQ), and Gln-120. Residue Cys-50 is the Nucleophile of the active site. 198 to 203 (GAGRMS) is a binding site for NADP(+).

The protein belongs to the glutamyl-tRNA reductase family. In terms of assembly, homodimer.

It carries out the reaction (S)-4-amino-5-oxopentanoate + tRNA(Glu) + NADP(+) = L-glutamyl-tRNA(Glu) + NADPH + H(+). Its pathway is porphyrin-containing compound metabolism; protoporphyrin-IX biosynthesis; 5-aminolevulinate from L-glutamyl-tRNA(Glu): step 1/2. It participates in porphyrin-containing compound metabolism; chlorophyll biosynthesis. Its function is as follows. Catalyzes the NADPH-dependent reduction of glutamyl-tRNA(Glu) to glutamate 1-semialdehyde (GSA). This chain is Glutamyl-tRNA reductase, found in Prochlorococcus marinus (strain NATL1A).